The following is a 546-amino-acid chain: Chaperonin GroEL (546 aa).

ATP is bound by residues 29-32 (TMGP), lysine 50, 86-90 (DGTTT), glycine 414, and aspartate 492.

The protein belongs to the chaperonin (HSP60) family. As to quaternary structure, forms a cylinder of 14 subunits composed of two heptameric rings stacked back-to-back. Interacts with the co-chaperonin GroES.

The protein localises to the cytoplasm. The enzyme catalyses ATP + H2O + a folded polypeptide = ADP + phosphate + an unfolded polypeptide.. Together with its co-chaperonin GroES, plays an essential role in assisting protein folding. The GroEL-GroES system forms a nano-cage that allows encapsulation of the non-native substrate proteins and provides a physical environment optimized to promote and accelerate protein folding. The sequence is that of Chaperonin GroEL from Helicobacter pylori (strain Shi470).